The primary structure comprises 225 residues: Histone H1 (225 aa).

Residues 1–20 are disordered; sequence MGPKATSGTRGRGKKVGTKT. An H15 domain is found at 23 to 94; it reads PLPKYKDLIV…GPAGSIKLLK (72 aa). Residues 95–147 form a disordered region; that stretch reads KAAQPKPEEAKRAAKPAKRVVKAAKPAKAKPAKAAKAAKPAKPVKAAKAASAV. The segment covering 107 to 127 has biased composition (basic residues); the sequence is AAKPAKRVVKAAKPAKAKPAK. Residues 128-147 show a composition bias toward low complexity; the sequence is AAKAAKPAKPVKAAKAASAV.

The protein belongs to the histone H1/H5 family.

It localises to the nucleus. It is found in the chromosome. Could act as an H1-type linker histone. The protein is Histone H1 (HHOA) of Eremothecium gossypii (strain ATCC 10895 / CBS 109.51 / FGSC 9923 / NRRL Y-1056) (Yeast).